The primary structure comprises 999 residues: Lysosomal alpha-mannosidase (999 aa).

The interval 1-25 is disordered; the sequence is MVGDARPSGVRAGGCRGAVGSRTSS. The signal sequence occupies residues 1-50; it reads MVGDARPSGVRAGGCRGAVGSRTSSRALRPPLPPLSSLFVLFLAAPCAWA. Residues histidine 73 and aspartate 75 each coordinate Zn(2+). N-linked (GlcNAc...) asparagine glycosylation is present at asparagine 134. Position 197 (aspartate 197) interacts with Zn(2+). Aspartate 197 serves as the catalytic Nucleophile. Cysteines 269 and 274 form a disulfide. The N-linked (GlcNAc...) asparagine glycan is linked to asparagine 369. Histidine 448 contacts Zn(2+). A disulfide bond links cysteine 495 and cysteine 503. Asparagine 499 is a glycosylation site (N-linked (GlcNAc...) asparagine). Residues 591–621 constitute a propeptide that is removed on maturation; that stretch reads SRDLVIQNEYLRARFDPNTGLLMELENLEQN. N-linked (GlcNAc...) asparagine glycosylation is found at asparagine 634, asparagine 640, asparagine 681, asparagine 755, and asparagine 919.

It belongs to the glycosyl hydrolase 38 family. As to quaternary structure, homodimer. Zn(2+) is required as a cofactor. Processed into 5 peptides of 35/38 kDa (A), 11/13 kDa (B) and 22 kDa (C), 38 kDa (D) and 13/15 kDa (E). The A, B and C peptides are disulfide-linked into a 67 kDa complex. In terms of processing, heavily glycosylated. Some sugar chains are of the high-mannose type.

It is found in the lysosome. It carries out the reaction Hydrolysis of terminal, non-reducing alpha-D-mannose residues in alpha-D-mannosides.. Its function is as follows. Necessary for the catabolism of N-linked carbohydrates released during glycoprotein turnover. This is Lysosomal alpha-mannosidase (MAN2B1) from Bos taurus (Bovine).